The primary structure comprises 355 residues: Peptide chain release factor 1 (355 aa).

Q233 is subject to N5-methylglutamine.

The protein belongs to the prokaryotic/mitochondrial release factor family. Methylated by PrmC. Methylation increases the termination efficiency of RF1.

Its subcellular location is the cytoplasm. In terms of biological role, peptide chain release factor 1 directs the termination of translation in response to the peptide chain termination codons UAG and UAA. The protein is Peptide chain release factor 1 of Caldicellulosiruptor bescii (strain ATCC BAA-1888 / DSM 6725 / KCTC 15123 / Z-1320) (Anaerocellum thermophilum).